We begin with the raw amino-acid sequence, 851 residues long: DNA mismatch repair protein MutS (851 aa).

Residue 614–621 coordinates ATP; it reads GPNMGGKS.

It belongs to the DNA mismatch repair MutS family.

This protein is involved in the repair of mismatches in DNA. It is possible that it carries out the mismatch recognition step. This protein has a weak ATPase activity. In Serratia proteamaculans (strain 568), this protein is DNA mismatch repair protein MutS.